A 276-amino-acid chain; its full sequence is Small ribosomal subunit protein uS2 (276 aa).

Serine 2 is modified (N-acetylserine).

The protein belongs to the universal ribosomal protein uS2 family. As to quaternary structure, component of the small ribosomal subunit. Mature ribosomes consist of a small (40S) and a large (60S) subunit. The 40S subunit contains about 33 different proteins and 1 molecule of RNA (18S). The 60S subunit contains about 49 different proteins and 3 molecules of RNA (28S, 5.8S and 5S). Interacts with rps-21.

It is found in the cytoplasm. In terms of biological role, required for the assembly and/or stability of the 40S ribosomal subunit. Required for the processing of the 20S rRNA-precursor to mature 18S rRNA in a late step of the maturation of 40S ribosomal subunits. Involved in cold-warm shock-induced translocation of the RNA exosome components from the nucleolus to nucleoplasm. This Caenorhabditis elegans protein is Small ribosomal subunit protein uS2.